The primary structure comprises 114 residues: Histone H3-6 (114 aa).

The segment covering 1–17 has biased composition (basic residues); that stretch reads NTGGKAPRKHIAHKQAK. The tract at residues 1–32 is disordered; sequence NTGGKAPRKHIAHKQAKKSSAAAATGGVKKPH. The segment covering 18-28 has biased composition (low complexity); the sequence is KSSAAAATGGV.

Belongs to the histone H3 family. In terms of assembly, the nucleosome is a histone octamer containing two molecules each of H2A, H2B, H3 and H4 assembled in one H3-H4 heterotetramer and two H2A-H2B heterodimers. The octamer wraps approximately 147 bp of DNA.

Its subcellular location is the nucleus. The protein resides in the chromosome. In terms of biological role, core component of nucleosome. Nucleosomes wrap and compact DNA into chromatin, limiting DNA accessibility to the cellular machineries which require DNA as a template. Histones thereby play a central role in transcription regulation, DNA repair, DNA replication and chromosomal stability. DNA accessibility is regulated via a complex set of post-translational modifications of histones, also called histone code, and nucleosome remodeling. The polypeptide is Histone H3-6 (H3-6) (Stylonychia lemnae (Ciliate)).